Reading from the N-terminus, the 69-residue chain is Large ribosomal subunit protein eL38 (69 aa).

The protein belongs to the eukaryotic ribosomal protein eL38 family.

In Solanum lycopersicum (Tomato), this protein is Large ribosomal subunit protein eL38 (RPL38).